We begin with the raw amino-acid sequence, 406 residues long: N-acetylmuramoyl-L-alanine amidase CwlM (406 aa).

Peptidoglycan-binding domain regions lie at residues 18–83 (SAAV…YRAL) and 105–160 (GDDV…LRSL). The 178-residue stretch at 193–370 (IIIDPGRGGV…IAEGILAAVK (178 aa)) folds into the MurNAc-LAA domain.

It belongs to the N-acetylmuramoyl-L-alanine amidase 3 family.

Its subcellular location is the periplasm. The catalysed reaction is Hydrolyzes the link between N-acetylmuramoyl residues and L-amino acid residues in certain cell-wall glycopeptides.. Its pathway is cell wall degradation; peptidoglycan degradation. Cell-wall hydrolase that hydrolyzes the amide bond between N-acetylmuramic acid and L-alanine in cell-wall glycopeptides. Is able to lyse whole mycobacteria, release peptidoglycan from the cell wall of M.luteus and M.smegmatis, and cleave N-acetylmuramoyl-L-alanyl-D-isoglutamine, releasing free N-acetylmuramic acid and dipeptide. This chain is N-acetylmuramoyl-L-alanine amidase CwlM, found in Mycobacterium tuberculosis (strain ATCC 25618 / H37Rv).